A 466-amino-acid chain; its full sequence is UDP-N-acetylmuramoylalanine--D-glutamate ligase (466 aa).

Glycine 121–threonine 127 lines the ATP pocket.

The protein belongs to the MurCDEF family.

It is found in the cytoplasm. The enzyme catalyses UDP-N-acetyl-alpha-D-muramoyl-L-alanine + D-glutamate + ATP = UDP-N-acetyl-alpha-D-muramoyl-L-alanyl-D-glutamate + ADP + phosphate + H(+). The protein operates within cell wall biogenesis; peptidoglycan biosynthesis. Functionally, cell wall formation. Catalyzes the addition of glutamate to the nucleotide precursor UDP-N-acetylmuramoyl-L-alanine (UMA). The chain is UDP-N-acetylmuramoylalanine--D-glutamate ligase from Rhodopseudomonas palustris (strain HaA2).